A 602-amino-acid polypeptide reads, in one-letter code: Elongation factor 4 (602 aa).

The tr-type G domain occupies Ser7–Ala189. GTP-binding positions include Asp19 to Thr24 and Asn136 to Asp139.

The protein belongs to the TRAFAC class translation factor GTPase superfamily. Classic translation factor GTPase family. LepA subfamily.

It localises to the cell inner membrane. It catalyses the reaction GTP + H2O = GDP + phosphate + H(+). Its function is as follows. Required for accurate and efficient protein synthesis under certain stress conditions. May act as a fidelity factor of the translation reaction, by catalyzing a one-codon backward translocation of tRNAs on improperly translocated ribosomes. Back-translocation proceeds from a post-translocation (POST) complex to a pre-translocation (PRE) complex, thus giving elongation factor G a second chance to translocate the tRNAs correctly. Binds to ribosomes in a GTP-dependent manner. The sequence is that of Elongation factor 4 from Gloeobacter violaceus (strain ATCC 29082 / PCC 7421).